A 79-amino-acid chain; its full sequence is Morintide mO2 (79 aa).

The first 20 residues, 1–20, serve as a signal peptide directing secretion; that stretch reads MAKLSFLSLFLLCLVATATA. A Chitin-binding type-1 domain is found at 21–63; that stretch reads QNCGRQAGNRACANGLCCSQYGFCGSTSEYCSRANGCQSNCRG. Disulfide bonds link cysteine 23/cysteine 38, cysteine 32/cysteine 44, cysteine 37/cysteine 51, and cysteine 57/cysteine 61. Positions 64-79 are excised as a propeptide; sequence GGGAGGAGGGAGGGSP.

Leaves (at protein level).

Chitin-binding protein which functions in defense against chitin-containing fungal pathogens. The protein is Morintide mO2 of Moringa oleifera (Horseradish tree).